A 600-amino-acid chain; its full sequence is 1-deoxy-D-xylulose-5-phosphate synthase (600 aa).

Residues His63 and 104–106 contribute to the thiamine diphosphate site; that span reads GHS. Asp135 is a Mg(2+) binding site. Thiamine diphosphate-binding positions include 136–137, Asn164, Tyr271, and Glu352; that span reads GA. Asn164 is a Mg(2+) binding site.

This sequence belongs to the transketolase family. DXPS subfamily. In terms of assembly, homodimer. Mg(2+) serves as cofactor. It depends on thiamine diphosphate as a cofactor.

The catalysed reaction is D-glyceraldehyde 3-phosphate + pyruvate + H(+) = 1-deoxy-D-xylulose 5-phosphate + CO2. The protein operates within metabolic intermediate biosynthesis; 1-deoxy-D-xylulose 5-phosphate biosynthesis; 1-deoxy-D-xylulose 5-phosphate from D-glyceraldehyde 3-phosphate and pyruvate: step 1/1. Functionally, catalyzes the acyloin condensation reaction between C atoms 2 and 3 of pyruvate and glyceraldehyde 3-phosphate to yield 1-deoxy-D-xylulose-5-phosphate (DXP). The chain is 1-deoxy-D-xylulose-5-phosphate synthase from Campylobacter fetus subsp. fetus (strain 82-40).